The sequence spans 454 residues: Bifunctional protein GlmU (454 aa).

The tract at residues 1-227 (MTQLSVVILA…FMEVEGANNR (227 aa)) is pyrophosphorylase. Residues 9–12 (LAAG), K23, Q74, 79–80 (GT), 101–103 (YGD), G138, E152, N167, and N225 each bind UDP-N-acetyl-alpha-D-glucosamine. A Mg(2+)-binding site is contributed by D103. N225 is a Mg(2+) binding site. A linker region spans residues 228–248 (LQLAALERFYQKTQAEKLLLA). Positions 249-454 (GVRLIDPARF…QGWQRPTKKK (206 aa)) are N-acetyltransferase. Positions 331 and 349 each coordinate UDP-N-acetyl-alpha-D-glucosamine. The Proton acceptor role is filled by H361. UDP-N-acetyl-alpha-D-glucosamine-binding residues include Y364 and N375. Acetyl-CoA-binding positions include A378, 384-385 (NY), S403, A421, and R438.

The protein in the N-terminal section; belongs to the N-acetylglucosamine-1-phosphate uridyltransferase family. This sequence in the C-terminal section; belongs to the transferase hexapeptide repeat family. In terms of assembly, homotrimer. The cofactor is Mg(2+).

Its subcellular location is the cytoplasm. The enzyme catalyses alpha-D-glucosamine 1-phosphate + acetyl-CoA = N-acetyl-alpha-D-glucosamine 1-phosphate + CoA + H(+). It catalyses the reaction N-acetyl-alpha-D-glucosamine 1-phosphate + UTP + H(+) = UDP-N-acetyl-alpha-D-glucosamine + diphosphate. The protein operates within nucleotide-sugar biosynthesis; UDP-N-acetyl-alpha-D-glucosamine biosynthesis; N-acetyl-alpha-D-glucosamine 1-phosphate from alpha-D-glucosamine 6-phosphate (route II): step 2/2. Its pathway is nucleotide-sugar biosynthesis; UDP-N-acetyl-alpha-D-glucosamine biosynthesis; UDP-N-acetyl-alpha-D-glucosamine from N-acetyl-alpha-D-glucosamine 1-phosphate: step 1/1. It participates in bacterial outer membrane biogenesis; LPS lipid A biosynthesis. In terms of biological role, catalyzes the last two sequential reactions in the de novo biosynthetic pathway for UDP-N-acetylglucosamine (UDP-GlcNAc). The C-terminal domain catalyzes the transfer of acetyl group from acetyl coenzyme A to glucosamine-1-phosphate (GlcN-1-P) to produce N-acetylglucosamine-1-phosphate (GlcNAc-1-P), which is converted into UDP-GlcNAc by the transfer of uridine 5-monophosphate (from uridine 5-triphosphate), a reaction catalyzed by the N-terminal domain. The polypeptide is Bifunctional protein GlmU (Actinobacillus pleuropneumoniae serotype 3 (strain JL03)).